A 406-amino-acid chain; its full sequence is GTPase Obg (406 aa).

Residues 1–159 (MKFVDEVSIF…RDLKLELKVL (159 aa)) form the Obg domain. Positions 126–149 (GNTRFKSSTNRAPRQTTPGKPGES) are disordered. Residues 129–143 (RFKSSTNRAPRQTTP) show a composition bias toward polar residues. An OBG-type G domain is found at 160–333 (ADVGLLGLPN…ICRDIMHYLE (174 aa)). Residues 166–173 (GLPNAGKS), 191–195 (FTTLV), 213–216 (DIPG), 283–286 (NKMD), and 314–316 (SAI) contribute to the GTP site. Positions 173 and 193 each coordinate Mg(2+). The segment at 376–406 (SGVRSVDDIDEDDDFFDDEDDDGPEIIYVRD) is disordered. A compositionally biased stretch (acidic residues) spans 383–399 (DIDEDDDFFDDEDDDGP).

Belongs to the TRAFAC class OBG-HflX-like GTPase superfamily. OBG GTPase family. In terms of assembly, monomer. The cofactor is Mg(2+).

The protein localises to the cytoplasm. Its function is as follows. An essential GTPase which binds GTP, GDP and possibly (p)ppGpp with moderate affinity, with high nucleotide exchange rates and a fairly low GTP hydrolysis rate. Plays a role in control of the cell cycle, stress response, ribosome biogenesis and in those bacteria that undergo differentiation, in morphogenesis control. In Ectopseudomonas mendocina (strain ymp) (Pseudomonas mendocina), this protein is GTPase Obg.